Consider the following 181-residue polypeptide: Probable cobalt-precorrin-6B C(15)-methyltransferase (decarboxylating) (181 aa).

S-adenosyl-L-methionine is bound by residues T16, 40 to 44, D61, and A89; that span reads GCGSG.

This sequence belongs to the methyltransferase superfamily. Archaeal-type CbiT family.

The enzyme catalyses Co-precorrin-6B + S-adenosyl-L-methionine = Co-precorrin-7 + S-adenosyl-L-homocysteine + CO2. It functions in the pathway cofactor biosynthesis; adenosylcobalamin biosynthesis; cob(II)yrinate a,c-diamide from sirohydrochlorin (anaerobic route): step 8/10. In terms of biological role, catalyzes the methylation of C-15 in cobalt-precorrin-6B followed by the decarboxylation of C-12 to form cobalt-precorrin-7. The protein is Probable cobalt-precorrin-6B C(15)-methyltransferase (decarboxylating) of Methanococcus maripaludis (strain C5 / ATCC BAA-1333).